The chain runs to 231 residues: 5'-methylthioadenosine/S-adenosylhomocysteine nucleosidase (231 aa).

Catalysis depends on Glu-12, which acts as the Proton acceptor. Substrate contacts are provided by residues Gly-78, Val-153, and 174-175 (ME). The active-site Proton donor is the Asp-198.

The protein belongs to the PNP/UDP phosphorylase family. MtnN subfamily.

It catalyses the reaction S-adenosyl-L-homocysteine + H2O = S-(5-deoxy-D-ribos-5-yl)-L-homocysteine + adenine. The catalysed reaction is S-methyl-5'-thioadenosine + H2O = 5-(methylsulfanyl)-D-ribose + adenine. The enzyme catalyses 5'-deoxyadenosine + H2O = 5-deoxy-D-ribose + adenine. The protein operates within amino-acid biosynthesis; L-methionine biosynthesis via salvage pathway; S-methyl-5-thio-alpha-D-ribose 1-phosphate from S-methyl-5'-thioadenosine (hydrolase route): step 1/2. Catalyzes the irreversible cleavage of the glycosidic bond in both 5'-methylthioadenosine (MTA) and S-adenosylhomocysteine (SAH/AdoHcy) to adenine and the corresponding thioribose, 5'-methylthioribose and S-ribosylhomocysteine, respectively. Also cleaves 5'-deoxyadenosine, a toxic by-product of radical S-adenosylmethionine (SAM) enzymes, into 5-deoxyribose and adenine. The chain is 5'-methylthioadenosine/S-adenosylhomocysteine nucleosidase from Aliivibrio fischeri (strain MJ11) (Vibrio fischeri).